A 114-amino-acid polypeptide reads, in one-letter code: Ribosome-binding factor A (114 aa).

Belongs to the RbfA family. In terms of assembly, monomer. Binds 30S ribosomal subunits, but not 50S ribosomal subunits or 70S ribosomes.

It is found in the cytoplasm. In terms of biological role, one of several proteins that assist in the late maturation steps of the functional core of the 30S ribosomal subunit. Associates with free 30S ribosomal subunits (but not with 30S subunits that are part of 70S ribosomes or polysomes). Required for efficient processing of 16S rRNA. May interact with the 5'-terminal helix region of 16S rRNA. This chain is Ribosome-binding factor A, found in Macrococcus caseolyticus (strain JCSC5402) (Macrococcoides caseolyticum).